Reading from the N-terminus, the 119-residue chain is MMKLYSLVIIATLAAAAFAATSEEISAAVSEIISQHQEDLERYAKIVERGEEPKKYIRCSKQLGQSCYLNCECCGASAVCEDIKYICKDKVSDNSILDAMGKAWNAVGNSISRYYCSAE.

The signal sequence occupies residues 1–19 (MMKLYSLVIIATLAAAAFA). 4 cysteine pairs are disulfide-bonded: C59–C74, C67–C80, C71–C116, and C73–C87.

This sequence belongs to the neurotoxin 25 family. ICK-8 subfamily. Expressed by the venom gland.

It is found in the secreted. Functionally, ion channel inhibitor. This Trittame loki (Brush-footed trapdoor spider) protein is Toxin ICK-8.